We begin with the raw amino-acid sequence, 235 residues long: Clathrin light chain A (235 aa).

The tract at residues 1–32 is disordered; it reads MAELDPFGAPAGAPGGPALGNGVAGAGEEDPA. Residues 13-25 show a composition bias toward gly residues; the sequence is APGGPALGNGVAG. Residues 99–161 are involved in binding clathrin heavy chain; the sequence is VDRLQSEPES…QLQKTKANNR (63 aa). Ser104 and Ser193 each carry phosphoserine. Lys210 carries the N6-acetyllysine modification. At Ser223 the chain carries Phosphoserine. Lys229 is subject to N6-acetyllysine.

This sequence belongs to the clathrin light chain family. Clathrin coats are formed from molecules containing 3 heavy chains and 3 light chains. Interacts with CALY; the interaction stimulates clathrin self-assembly and clathrin-mediated endocytosis. Interacts with CKAP5 and TACC3 forming the TACC3/ch-TOG/clathrin complex located at spindle inter-microtubules bridges; the complex implicates clathrin triskelions.

The protein resides in the cytoplasmic vesicle membrane. It localises to the membrane. Its subcellular location is the coated pit. It is found in the cytoplasm. The protein localises to the cytoskeleton. The protein resides in the spindle. Clathrin is the major protein of the polyhedral coat of coated pits and vesicles. Acts as a component of the TACC3/ch-TOG/clathrin complex proposed to contribute to stabilization of kinetochore fibers of the mitotic spindle by acting as inter-microtubule bridge. The chain is Clathrin light chain A (Clta) from Mus musculus (Mouse).